Here is a 408-residue protein sequence, read N- to C-terminus: NADH-quinone oxidoreductase subunit D (408 aa).

The protein belongs to the complex I 49 kDa subunit family. NDH-1 is composed of 14 different subunits. Subunits NuoB, C, D, E, F, and G constitute the peripheral sector of the complex.

The protein resides in the cell inner membrane. The enzyme catalyses a quinone + NADH + 5 H(+)(in) = a quinol + NAD(+) + 4 H(+)(out). Its function is as follows. NDH-1 shuttles electrons from NADH, via FMN and iron-sulfur (Fe-S) centers, to quinones in the respiratory chain. The immediate electron acceptor for the enzyme in this species is believed to be ubiquinone. Couples the redox reaction to proton translocation (for every two electrons transferred, four hydrogen ions are translocated across the cytoplasmic membrane), and thus conserves the redox energy in a proton gradient. This Campylobacter jejuni subsp. jejuni serotype O:23/36 (strain 81-176) protein is NADH-quinone oxidoreductase subunit D.